A 596-amino-acid polypeptide reads, in one-letter code: Cis-3-hydroxy-L-proline dehydratase (596 aa).

The Proton acceptor role is filled by Ser67.

Belongs to the AcnX family. In terms of assembly, monomer. Fe(3+) is required as a cofactor.

The enzyme catalyses cis-3-hydroxy-L-proline = 1-pyrroline-2-carboxylate + H2O. Inhibited by Zn(2+). Not inhibited by pyrrole-2-carboxylate nor its derivative 2-thiophenecarboxylate. In terms of biological role, catalyzes the dehydration of cis-3-hydroxy-L-proline (c3LHyp) to Delta(1)-pyrroline-2-carboxylate (Pyr2C). No activity with L-proline, trans-4-hydroxy-L-proline (t4LHyp), cis-4-hydroxy-L-proline (c4LHyp), trans-3-hydroxy-L-proline (t3LHyp), D-proline, cis-4-hydroxy-D-proline (c4DHyp), trans-4-hydroxy-D-proline (t4DHyp) or L-serine as substrates. Because of the low catalytic efficiency, C3LHyp is likely not a main physiological substrate of this enzyme in H.jecorina. This Hypocrea jecorina (strain QM6a) (Trichoderma reesei) protein is Cis-3-hydroxy-L-proline dehydratase.